The sequence spans 160 residues: uncharacterized protein (160 aa).

A helical transmembrane segment spans residues 137–157 (YNILFVVVILLLLFVAWRCYV).

Its subcellular location is the host membrane. The protein resides in the virion. This is an uncharacterized protein from Acanthamoeba polyphaga mimivirus (APMV).